The primary structure comprises 434 residues: GTPase Obg (434 aa).

In terms of domain architecture, Obg spans 1-158; it reads MFLDTAKIKV…RELQLELKIL (158 aa). The region spanning 159–336 is the OBG-type G domain; it reads ADVGLVGFPS…LLDATAELLD (178 aa). Residues 165–172, 190–194, 212–215, 282–285, and 317–319 each bind GTP; these read GFPSVGKS, FTTIV, DLPG, NKMD, and SGL. The Mg(2+) site is built by Ser172 and Thr192. In terms of domain architecture, OCT spans 356–434; the sequence is GFDEEEKAFE…IGKFEFEFVD (79 aa).

The protein belongs to the TRAFAC class OBG-HflX-like GTPase superfamily. OBG GTPase family. In terms of assembly, monomer. It depends on Mg(2+) as a cofactor.

The protein localises to the cytoplasm. An essential GTPase which binds GTP, GDP and possibly (p)ppGpp with moderate affinity, with high nucleotide exchange rates and a fairly low GTP hydrolysis rate. Plays a role in control of the cell cycle, stress response, ribosome biogenesis and in those bacteria that undergo differentiation, in morphogenesis control. This Streptococcus pneumoniae serotype 19F (strain G54) protein is GTPase Obg.